Here is a 626-residue protein sequence, read N- to C-terminus: Chaperone protein HtpG (626 aa).

Residues 1-341 (METKQFKAES…SEDLSLNISR (341 aa)) are a; substrate-binding. The segment at 342-552 (EILQHDRQLK…EGELSIEMEK (211 aa)) is b. Positions 553–626 (VLNAMPNNQN…FTNNICKIMK (74 aa)) are c.

It belongs to the heat shock protein 90 family. Homodimer.

The protein localises to the cytoplasm. Molecular chaperone. Has ATPase activity. In Clostridium botulinum (strain 657 / Type Ba4), this protein is Chaperone protein HtpG.